Reading from the N-terminus, the 430-residue chain is Probable dual-specificity RNA methyltransferase RlmN (430 aa).

Residue Glu125 is the Proton acceptor of the active site. The Radical SAM core domain occupies 152–395; sequence RHGRVTLCVS…VTVRDTRGRE (244 aa). Cys159 and Cys400 are joined by a disulfide. [4Fe-4S] cluster contacts are provided by Cys166, Cys170, and Cys173. Residues 221–222, Ser255, 278–280, and Asn357 each bind S-adenosyl-L-methionine; these read GE and SLH. Residue Cys400 is the S-methylcysteine intermediate of the active site.

It belongs to the radical SAM superfamily. RlmN family. The cofactor is [4Fe-4S] cluster.

The protein resides in the cytoplasm. It catalyses the reaction adenosine(2503) in 23S rRNA + 2 reduced [2Fe-2S]-[ferredoxin] + 2 S-adenosyl-L-methionine = 2-methyladenosine(2503) in 23S rRNA + 5'-deoxyadenosine + L-methionine + 2 oxidized [2Fe-2S]-[ferredoxin] + S-adenosyl-L-homocysteine. It carries out the reaction adenosine(37) in tRNA + 2 reduced [2Fe-2S]-[ferredoxin] + 2 S-adenosyl-L-methionine = 2-methyladenosine(37) in tRNA + 5'-deoxyadenosine + L-methionine + 2 oxidized [2Fe-2S]-[ferredoxin] + S-adenosyl-L-homocysteine. Its function is as follows. Specifically methylates position 2 of adenine 2503 in 23S rRNA and position 2 of adenine 37 in tRNAs. The sequence is that of Probable dual-specificity RNA methyltransferase RlmN from Acidothermus cellulolyticus (strain ATCC 43068 / DSM 8971 / 11B).